A 642-amino-acid polypeptide reads, in one-letter code: Tigger transposable element derived 5 (642 aa).

The disordered stretch occupies residues methionine 1 to proline 54. The segment covering proline 31–arginine 53 has biased composition (pro residues). One can recognise an HTH psq-type domain in the interval alanine 57 to leucine 108. DNA-binding regions (H-T-H motif) lie at residues glutamine 84–aspartate 104 and proline 155–arginine 188. Residues glutamine 122 to arginine 195 enclose the HTH CENPB-type domain. Residues serine 202 to tyrosine 238 form a disordered region. The 126-residue stretch at aspartate 240–valine 365 folds into the DDE-1 domain. Disordered stretches follow at residues threonine 375–glutamate 400 and glycine 548–glycine 581.

It belongs to the tigger transposable element derived protein family.

The protein resides in the nucleus. This Mus musculus (Mouse) protein is Tigger transposable element derived 5 (Tigd5).